The following is a 76-amino-acid chain: Acyl carrier protein (76 aa).

The 75-residue stretch at Lys2–Asn76 folds into the Carrier domain. Ser37 carries the post-translational modification O-(pantetheine 4'-phosphoryl)serine.

Belongs to the acyl carrier protein (ACP) family. Post-translationally, 4'-phosphopantetheine is transferred from CoA to a specific serine of apo-ACP by AcpS. This modification is essential for activity because fatty acids are bound in thioester linkage to the sulfhydryl of the prosthetic group.

It localises to the plastid. The protein resides in the chloroplast. It participates in lipid metabolism; fatty acid biosynthesis. Functionally, carrier of the growing fatty acid chain in fatty acid biosynthesis. In Phaeodactylum tricornutum (strain CCAP 1055/1), this protein is Acyl carrier protein.